The primary structure comprises 397 residues: Tyrosine--tRNA ligase (397 aa).

The 'HIGH' region motif lies at 41 to 50 (PTAPDLHLGH). The 'KMSKS' region signature appears at 225-229 (KMSKS). Lys-228 is a binding site for ATP. An S4 RNA-binding domain is found at 340-396 (AFLADSGLAGSRGEAKRLIKQGALSLDGEKLDDPNTPLTAGEYVVRLGKKRFLRLIV).

This sequence belongs to the class-I aminoacyl-tRNA synthetase family. TyrS type 2 subfamily. In terms of assembly, homodimer.

It is found in the cytoplasm. The catalysed reaction is tRNA(Tyr) + L-tyrosine + ATP = L-tyrosyl-tRNA(Tyr) + AMP + diphosphate + H(+). Its function is as follows. Catalyzes the attachment of tyrosine to tRNA(Tyr) in a two-step reaction: tyrosine is first activated by ATP to form Tyr-AMP and then transferred to the acceptor end of tRNA(Tyr). The polypeptide is Tyrosine--tRNA ligase (Oleidesulfovibrio alaskensis (strain ATCC BAA-1058 / DSM 17464 / G20) (Desulfovibrio alaskensis)).